A 144-amino-acid polypeptide reads, in one-letter code: Translation initiation factor 5A (144 aa).

Lys-38 is subject to Hypusine.

This sequence belongs to the eIF-5A family.

The protein resides in the cytoplasm. In terms of biological role, functions by promoting the formation of the first peptide bond. The chain is Translation initiation factor 5A from Nanoarchaeum equitans (strain Kin4-M).